We begin with the raw amino-acid sequence, 62 residues long: Flavodoxin (62 aa).

A Flavodoxin-like domain is found at 4-62 (IGIFFGTDTGKTRKIAKMIHKQLGELADAPVNINRTTLDDFMAYPVLLLGTPTLGDGQL).

This sequence belongs to the flavodoxin family. Requires FMN as cofactor.

Its function is as follows. Low-potential electron donor to a number of redox enzymes. NifF is the electron donor to nitrogenase. The polypeptide is Flavodoxin (nifF) (Klebsiella oxytoca).